The chain runs to 147 residues: Cyanate hydratase (147 aa).

Residues Arg88, Glu91, and Ser114 contribute to the active site.

The protein belongs to the cyanase family.

It carries out the reaction cyanate + hydrogencarbonate + 3 H(+) = NH4(+) + 2 CO2. In terms of biological role, catalyzes the reaction of cyanate with bicarbonate to produce ammonia and carbon dioxide. In Cupriavidus necator (strain ATCC 17699 / DSM 428 / KCTC 22496 / NCIMB 10442 / H16 / Stanier 337) (Ralstonia eutropha), this protein is Cyanate hydratase.